The following is a 354-amino-acid chain: Rhodopsin (354 aa).

Over 1-36 the chain is Extracellular; that stretch reads MNGTEGPAFYVPMSNATGVVRSPYEYPQYYLVAPWA. N-linked (GlcNAc...) asparagine glycosylation is found at Asn-2 and Asn-15. The chain crosses the membrane as a helical span at residues 37 to 61; it reads YGLLAAYMFFLIITGFPVNFLTLYV. Residues 62-73 lie on the Cytoplasmic side of the membrane; the sequence is TIEHKKLRTPLN. A helical transmembrane segment spans residues 74-96; the sequence is YILLNLAIADLFMVFGGFTTTMY. Residues 97–110 lie on the Extracellular side of the membrane; the sequence is TSLHGYFVFGRLGC. Cys-110 and Cys-187 are disulfide-bonded. The chain crosses the membrane as a helical span at residues 111 to 133; that stretch reads NLEGFFATLGGEMGLWSLVVLAI. A 'Ionic lock' involved in activated form stabilization motif is present at residues 134–136; it reads ERW. Over 134 to 152 the chain is Cytoplasmic; sequence ERWMVVCKPVSNFRFGENH. The chain crosses the membrane as a helical span at residues 153 to 173; sequence AIMGVAFTWVMACSCAVPPLV. Topologically, residues 174 to 202 are extracellular; sequence GWSRYIPEGMQCSCGVDYYTRTPGVNNES. Asn-200 is a glycosylation site (N-linked (GlcNAc...) asparagine). Residues 203 to 224 traverse the membrane as a helical segment; the sequence is FVIYMFIVHFFIPLIVIFFCYG. At 225–252 the chain is on the cytoplasmic side; that stretch reads RLVCTVKEAAAQQQESETTQRAEREVTR. The chain crosses the membrane as a helical span at residues 253 to 274; the sequence is MVIIMVIAFLICWLPYAGVAWY. Over 275 to 286 the chain is Extracellular; the sequence is IFTHQGSEFGPV. The helical transmembrane segment at 287 to 308 threads the bilayer; it reads FMTLPAFFAKTSAVYNPCIYIC. The residue at position 296 (Lys-296) is an N6-(retinylidene)lysine. Topologically, residues 309-354 are cytoplasmic; that stretch reads MNKQFRHCMITTLCCGKNPFEEEEGASTTASKTEASSVSSSSVSPA. Residues 333 to 354 form a disordered region; sequence GASTTASKTEASSVSSSSVSPA. Residues 334–354 are compositionally biased toward low complexity; the sequence is ASTTASKTEASSVSSSSVSPA.

The protein belongs to the G-protein coupled receptor 1 family. Opsin subfamily. Phosphorylated on some or all of the serine and threonine residues present in the C-terminal region. In terms of processing, contains one covalently linked retinal chromophore. As to expression, retinal rod photoreceptor cells, predominantly in the outer segments (at protein level). Retinal rod photoreceptor cells.

It is found in the membrane. It localises to the cell projection. The protein resides in the cilium. Its subcellular location is the photoreceptor outer segment. In terms of biological role, photoreceptor required for image-forming vision at low light intensity. While most salt water fish species use retinal as chromophore, most freshwater fish use 3-dehydroretinal, or a mixture of retinal and 3-dehydroretinal. Light-induced isomerization of 11-cis to all-trans retinal triggers a conformational change that activates signaling via G-proteins. Subsequent receptor phosphorylation mediates displacement of the bound G-protein alpha subunit by arrestin and terminates signaling. The chain is Rhodopsin (rho) from Danio rerio (Zebrafish).